We begin with the raw amino-acid sequence, 166 residues long: Glutamyl-tRNA(Gln) amidotransferase subunit C, mitochondrial (166 aa).

The N-terminal 44 residues, 1-44 (MIRGWTIFTLCKPSALVGSSHFNKQFNWAKSQLQFATKVPQQPY), are a transit peptide targeting the mitochondrion.

The protein belongs to the GatC family. As to quaternary structure, subunit of the heterotrimeric GatCAB amidotransferase (AdT) complex, composed of A, B and C subunits.

It localises to the mitochondrion. It carries out the reaction L-glutamyl-tRNA(Gln) + L-glutamine + ATP + H2O = L-glutaminyl-tRNA(Gln) + L-glutamate + ADP + phosphate + H(+). Allows the formation of correctly charged Gln-tRNA(Gln) through the transamidation of misacylated Glu-tRNA(Gln) in the mitochondria. The reaction takes place in the presence of glutamine and ATP through an activated gamma-phospho-Glu-tRNA(Gln). This is Glutamyl-tRNA(Gln) amidotransferase subunit C, mitochondrial from Anopheles darlingi (Mosquito).